The chain runs to 2134 residues: Tudor domain-containing protein 6 (2134 aa).

The tract at residues 287 to 315 is disordered; that stretch reads RAPVGTDDEDSGSATWEEREESPDKPGSP. Thr292 carries the post-translational modification Phosphothreonine. 4 consecutive Tudor domains span residues 309-368, 542-599, 820-879, and 1038-1092; these read PDKP…YFRM, RPEP…FRQL, YEGD…FFQV, and TLAP…AHDV. Residues 1271–1296 are disordered; it reads SPMSGTKLDSALPERRMGEPSGRDLP. Positions 1282-1296 are enriched in basic and acidic residues; that stretch reads LPERRMGEPSGRDLP. Tudor domains lie at 1358 to 1417 and 1570 to 1630; these read QWQS…DAVL and CPQI…LLLV. Disordered regions lie at residues 1699–1733 and 1860–1885; these read KKYA…GLKK and LQHS…LSPG. Basic and acidic residues predominate over residues 1711 to 1722; it reads LSSEKRGPERKG. A phosphoserine mark is found at Ser1723 and Ser1726. At Ser1925 the chain carries Phosphoserine. A compositionally biased stretch (polar residues) spans 1930–1939; the sequence is AVSQDIQGSR. The interval 1930–1985 is disordered; it reads AVSQDIQGSRCSEDERKAGYMGSSDDDHSRSPLLQHGKGGNSPAHDGRNLSEEEFP. 3 positions are modified to phosphoserine: Ser1980, Ser2063, and Ser2115.

In terms of assembly, found in a mRNP complex (i.e. messenger ribonucleoproteins which correspond to mRNA with bound proteins), at least composed of TDRD1, TDRD6, TDRD7 and DDX4. Found in a complex, at least composed of PIWIL1, PIWIL2, DDX4 and TDRD6. Interacts with Tex19.1 and probably Tex19.2. Interacts with PRMT5. Interacts with SNRPB (when methylated); to trigger spliceosome formation. Undergoes proteolytic cleavage near the C-terminal by an unknown protease during the transition from meiosis I to meiosis II in primary spermatocytes. Testis specific. Expressed in primary spermatocytes at post natal (PN) day 17.5. Expressed in midpachytene stage of primary spermatocytes at PN16 and in round spermatids at PN22 (at protein level).

The protein localises to the cytoplasm. Functionally, tudor domain-containing protein involved in germ cell development, more specifically the formation of chromatoid body (during spermiogenesis), Balbiani body (during oogenesis), germ plasm (upon fertilization), and for proper miRNA expression and spliceosome maturation. Essential for RNA-dependent helicase UPF1 localization to chromatoid body, for UPF1-UPF2 and UPF1-DDX4 interactions which are required for mRNA degradation, using the extended 3' UTR-triggered nonsense-mediated mRNA decay (NMD) pathway. Involved in spliceosome maturation and mRNA splicing in prophase I spermatocytes through interaction with arginine N-methyltransferase PRMT5 and symmetrically arginine dimethylated SNRPB (small nuclear ribonucleoprotein-associated protein). In Mus musculus (Mouse), this protein is Tudor domain-containing protein 6.